A 275-amino-acid chain; its full sequence is Large ribosomal subunit protein uL2c (275 aa).

Residues V223–L255 form a disordered region.

It belongs to the universal ribosomal protein uL2 family. In terms of assembly, part of the 50S ribosomal subunit.

The protein localises to the plastid. Its subcellular location is the chloroplast. The sequence is that of Large ribosomal subunit protein uL2c (rpl2) from Pleurastrum terricola (Filamentous green alga).